A 30-amino-acid chain; its full sequence is NADH-ubiquinone oxidoreductase 18 kDa subunit (30 aa).

In terms of assembly, complex I is composed of about 45 different subunits.

It localises to the mitochondrion inner membrane. It carries out the reaction a ubiquinone + NADH + 5 H(+)(in) = a ubiquinol + NAD(+) + 4 H(+)(out). In terms of biological role, transfer of electrons from NADH to the respiratory chain. The immediate electron acceptor for the enzyme is believed to be ubiquinone. This chain is NADH-ubiquinone oxidoreductase 18 kDa subunit, found in Solanum tuberosum (Potato).